A 761-amino-acid chain; its full sequence is MFCSLRNFLHVNRRFPRHVSPSSSSLSQIQSPLCFPLSSPSPSQSSFISCPFVWFTSFLCIIRYPFVTKSGTSTYSEDFDRDWIRKVVHNDLWDDPGLEKLFDLTLAPIWVPRVLVELKEDPKLAFKFFKWSMTRNGFKHSVESYCIVAHILFCARMYYDANSVLKEMVLSKADCDVFDVLWSTRNVCVPGFGVFDALFSVLIDLGMLEEAIQCFSKMKRFRVFPKTRSCNGLLHRFAKLGKTDDVKRFFKDMIGAGARPTVFTYNIMIDCMCKEGDVEAARGLFEEMKFRGLVPDTVTYNSMIDGFGKVGRLDDTVCFFEEMKDMCCEPDVITYNALINCFCKFGKLPIGLEFYREMKGNGLKPNVVSYSTLVDAFCKEGMMQQAIKFYVDMRRVGLVPNEYTYTSLIDANCKIGNLSDAFRLGNEMLQVGVEWNVVTYTALIDGLCDAERMKEAEELFGKMDTAGVIPNLASYNALIHGFVKAKNMDRALELLNELKGRGIKPDLLLYGTFIWGLCSLEKIEAAKVVMNEMKECGIKANSLIYTTLMDAYFKSGNPTEGLHLLDEMKELDIEVTVVTFCVLIDGLCKNKLVSKAVDYFNRISNDFGLQANAAIFTAMIDGLCKDNQVEAATTLFEQMVQKGLVPDRTAYTSLMDGNFKQGNVLEALALRDKMAEIGMKLDLLAYTSLVWGLSHCNQLQKARSFLEEMIGEGIHPDEVLCISVLKKHYELGCIDEAVELQSYLMKHQLLTSDNDNALPNM.

PPR repeat units lie at residues 141-175 (SVESYCIVAHILFCARMYYDANSVLKEMVLSKADC), 191-225 (GFGVFDALFSVLIDLGMLEEAIQCFSKMKRFRVFP), 226-260 (KTRSCNGLLHRFAKLGKTDDVKRFFKDMIGAGARP), 261-295 (TVFTYNIMIDCMCKEGDVEAARGLFEEMKFRGLVP), 296-330 (DTVTYNSMIDGFGKVGRLDDTVCFFEEMKDMCCEP), 331-365 (DVITYNALINCFCKFGKLPIGLEFYREMKGNGLKP), 366-400 (NVVSYSTLVDAFCKEGMMQQAIKFYVDMRRVGLVP), 401-435 (NEYTYTSLIDANCKIGNLSDAFRLGNEMLQVGVEW), 436-470 (NVVTYTALIDGLCDAERMKEAEELFGKMDTAGVIP), 471-505 (NLASYNALIHGFVKAKNMDRALELLNELKGRGIKP), 506-540 (DLLLYGTFIWGLCSLEKIEAAKVVMNEMKECGIKA), 541-575 (NSLIYTTLMDAYFKSGNPTEGLHLLDEMKELDIEV), 576-606 (TVVTFCVLIDGLCKNKLVSKAVDYFNRISND), 612-646 (NAAIFTAMIDGLCKDNQVEAATTLFEQMVQKGLVP), 647-681 (DRTAYTSLMDGNFKQGNVLEALALRDKMAEIGMKL), 682-716 (DLLAYTSLVWGLSHCNQLQKARSFLEEMIGEGIHP), and 717-751 (DEVLCISVLKKHYELGCIDEAVELQSYLMKHQLLT).

It belongs to the PPR family. P subfamily.

The sequence is that of Putative pentatricopeptide repeat-containing protein At2g02150 from Arabidopsis thaliana (Mouse-ear cress).